The chain runs to 720 residues: Pro-neuregulin-3, membrane-bound isoform (720 aa).

Topologically, residues 1–360 are extracellular; the sequence is MSEGAAAASP…MESEEVYQRQ (360 aa). Disordered regions lie at residues 28–48, 119–223, and 246–280; these read AAAAAAAGGGPDGGGEGAAEP, SSFP…AMPS, and PFQDAASSSSSSSSSATTTTPETSTSPKFHTTTYS. Residues 34–44 are compositionally biased toward gly residues; the sequence is AGGGPDGGGEG. Low complexity predominate over residues 127-148; sequence TTTTTTSTTSPATPSAGGAASS. Residues 149-163 are compositionally biased toward polar residues; the sequence is RTPNRISTRLTTITR. Low complexity-rich tracts occupy residues 187 to 205 and 250 to 271; these read TAAPATVPSTTAPFFSSST and AASSSSSSSSSATTTTPETSTS. The EGF-like domain maps to 286–329; that stretch reads HFKPCRDKDLAYCLNDGECFVIETLTGSHKHCRCKEGYQGVRCD. Disulfide bonds link Cys290–Cys304, Cys298–Cys317, and Cys319–Cys328. A helical transmembrane segment spans residues 361 to 381; it reads VLSISCIIFGIVIVGMFCAAF. The Cytoplasmic segment spans residues 382–720; sequence YFKSKKQAKQ…EIQRDSALTK (339 aa). Positions 451 to 481 are disordered; that stretch reads PQSFPEVPSPDRGSQSVKHHRSLSSCCSPGQ.

Belongs to the neuregulin family. Interacts with ERBB4. Post-translationally, proteolytic cleavage close to the plasma membrane on the external face leads to the release of the soluble growth factor form. In terms of processing, extensive glycosylation precedes the proteolytic cleavage. Isoform 3 is glycosylated. Highly expressed in most regions of the brain with the exception of corpus callosum. Expressed at lower level in testis. Not detected in heart, placenta, lung, liver, skeletal muscle, kidney, pancreas, spleen, thymus, prostate, ovary, small intestine, colon and peripheral blood leukocytes.

It is found in the cell membrane. The protein localises to the secreted. In terms of biological role, direct ligand for the ERBB4 tyrosine kinase receptor. Binding results in ligand-stimulated tyrosine phosphorylation and activation of the receptor. Does not bind to the EGF receptor, ERBB2 or ERBB3 receptors. May be a survival factor for oligodendrocytes. This chain is Pro-neuregulin-3, membrane-bound isoform (NRG3), found in Homo sapiens (Human).